We begin with the raw amino-acid sequence, 356 residues long: S-adenosylmethionine:tRNA ribosyltransferase-isomerase (356 aa).

The protein belongs to the QueA family. In terms of assembly, monomer.

It localises to the cytoplasm. The catalysed reaction is 7-aminomethyl-7-carbaguanosine(34) in tRNA + S-adenosyl-L-methionine = epoxyqueuosine(34) in tRNA + adenine + L-methionine + 2 H(+). It functions in the pathway tRNA modification; tRNA-queuosine biosynthesis. Transfers and isomerizes the ribose moiety from AdoMet to the 7-aminomethyl group of 7-deazaguanine (preQ1-tRNA) to give epoxyqueuosine (oQ-tRNA). The chain is S-adenosylmethionine:tRNA ribosyltransferase-isomerase from Escherichia coli O81 (strain ED1a).